Reading from the N-terminus, the 188-residue chain is Archaemetzincin (188 aa).

Zn(2+) is bound at residue histidine 137. Glutamate 138 functions as the Proton acceptor in the catalytic mechanism. Residues histidine 141, histidine 147, cysteine 148, cysteine 153, cysteine 172, and cysteine 175 each coordinate Zn(2+).

It belongs to the peptidase M54 family. As to quaternary structure, monomer. Zn(2+) serves as cofactor.

In terms of biological role, probable zinc metalloprotease whose natural substrate is unknown. This chain is Archaemetzincin, found in Pyrococcus abyssi (strain GE5 / Orsay).